The primary structure comprises 739 residues: Catalase-peroxidase (739 aa).

Residues 1-23 (MLKKIVTALGMSGMLLASNSAIA) form the signal peptide. A cross-link (tryptophyl-tyrosyl-methioninium (Trp-Tyr) (with M-247)) is located at residues 100–221 (WHDAGTYRIY…YAATQMGLIY (122 aa)). The active-site Proton acceptor is His-101. Positions 221 to 247 (YVNPEGPDGKPDIKGAASEIRQAFRAM) form a cross-link, tryptophyl-tyrosyl-methioninium (Tyr-Met) (with W-100). Heme b is bound at residue His-262.

It belongs to the peroxidase family. Peroxidase/catalase subfamily. Homodimer or homotetramer. Heme b is required as a cofactor. Post-translationally, formation of the three residue Trp-Tyr-Met cross-link is important for the catalase, but not the peroxidase activity of the enzyme.

It carries out the reaction H2O2 + AH2 = A + 2 H2O. The enzyme catalyses 2 H2O2 = O2 + 2 H2O. Its function is as follows. Bifunctional enzyme with both catalase and broad-spectrum peroxidase activity. This Francisella tularensis subsp. novicida (strain U112) protein is Catalase-peroxidase.